A 366-amino-acid chain; its full sequence is UDP-N-acetylglucosamine--N-acetylmuramyl-(pentapeptide) pyrophosphoryl-undecaprenol N-acetylglucosamine transferase (366 aa).

UDP-N-acetyl-alpha-D-glucosamine-binding positions include 14-16 (TGG), Asn125, Arg168, Ser196, and Gln297.

This sequence belongs to the glycosyltransferase 28 family. MurG subfamily.

It is found in the cell inner membrane. It catalyses the reaction di-trans,octa-cis-undecaprenyl diphospho-N-acetyl-alpha-D-muramoyl-L-alanyl-D-glutamyl-meso-2,6-diaminopimeloyl-D-alanyl-D-alanine + UDP-N-acetyl-alpha-D-glucosamine = di-trans,octa-cis-undecaprenyl diphospho-[N-acetyl-alpha-D-glucosaminyl-(1-&gt;4)]-N-acetyl-alpha-D-muramoyl-L-alanyl-D-glutamyl-meso-2,6-diaminopimeloyl-D-alanyl-D-alanine + UDP + H(+). The protein operates within cell wall biogenesis; peptidoglycan biosynthesis. Its function is as follows. Cell wall formation. Catalyzes the transfer of a GlcNAc subunit on undecaprenyl-pyrophosphoryl-MurNAc-pentapeptide (lipid intermediate I) to form undecaprenyl-pyrophosphoryl-MurNAc-(pentapeptide)GlcNAc (lipid intermediate II). The polypeptide is UDP-N-acetylglucosamine--N-acetylmuramyl-(pentapeptide) pyrophosphoryl-undecaprenol N-acetylglucosamine transferase (Rhodopseudomonas palustris (strain HaA2)).